A 286-amino-acid polypeptide reads, in one-letter code: Small ribosomal subunit protein uS2 (286 aa).

The disordered stretch occupies residues 213 to 286; the sequence is EEQAQNNKWA…GAQEGGEWGS (74 aa). Positions 227 to 241 are enriched in low complexity; the sequence is SPALSAAVPSSAAPV. The span at 244 to 270 shows a compositional bias: polar residues; sequence WSSSPSKETTEWGASNTAAAAKSSWSN. The span at 274–286 shows a compositional bias: gly residues; sequence GEWGAQEGGEWGS.

Belongs to the universal ribosomal protein uS2 family. As to quaternary structure, component of the small ribosomal subunit. Mature ribosomes consist of a small (40S) and a large (60S) subunit. The 40S subunit contains about 33 different proteins and 1 molecule of RNA (18S). The 60S subunit contains about 49 different proteins and 3 molecules of RNA (28S, 5.8S and 5S). Interacts with ribosomal protein S21.

The protein resides in the cytoplasm. Required for the assembly and/or stability of the 40S ribosomal subunit. Required for the processing of the 20S rRNA-precursor to mature 18S rRNA in a late step of the maturation of 40S ribosomal subunits. The polypeptide is Small ribosomal subunit protein uS2 (Trichoplax adhaerens (Trichoplax reptans)).